Consider the following 429-residue polypeptide: MRVKYFGTDGIRGVFGETLTDELAFKVGKALGEIVGEGRVIVGKDTRVSGDSLEAAISAGLTSMGVDVLLCGVLPTPAVALLTRITRSFGVVISASHNPPEYNGIKVLKGGYKIPDEMEVKIEEKIESGYFPVRSVVGRTKSFREGRDMYIGAVLEIFRDLDLTGEMVSLDLANGATTTTAKEVFEFLGAKVEVFNDSQDGLLINQGCGATHPRFLAEEMKNGKVGFTFDGDGDRVIAVDEERNVVNGDRIIGILAVGLKEEGRLNSDTVVGTVMTNGGLEDFLKERGIKLLRTKVGDKYVLEKMIESGANLGGERSGHIIILDRSTTGDGLITALELMRVLRRSGRNLSDFAKEIPDYPQITKNVRRTERMSLENENLRKIVEESTSRGYRVVIRPSGTEPVVRITVEGKDREEIEKIVEEISRVLES.

Serine 96 acts as the Phosphoserine intermediate in catalysis. The Mg(2+) site is built by serine 96, aspartate 230, aspartate 232, and aspartate 234. Residue serine 96 is modified to Phosphoserine.

It belongs to the phosphohexose mutase family. Mg(2+) is required as a cofactor. Activated by phosphorylation.

It catalyses the reaction alpha-D-glucosamine 1-phosphate = D-glucosamine 6-phosphate. Functionally, catalyzes the conversion of glucosamine-6-phosphate to glucosamine-1-phosphate. The chain is Phosphoglucosamine mutase from Thermotoga petrophila (strain ATCC BAA-488 / DSM 13995 / JCM 10881 / RKU-1).